The primary structure comprises 219 residues: Trafficking protein particle complex subunit 4 (219 aa).

Belongs to the TRAPP small subunits family. TRAPPC4 subfamily. In terms of assembly, component of the multisubunit TRAPP (transport protein particle) complex, which includes at least TRAPPC2, TRAPPC2L, TRAPPC3, TRAPPC3L, TRAPPC4, TRAPPC5, TRAPPC8, TRAPPC9, TRAPPC10, TRAPPC11 and TRAPPC12. Interacts with SDC2.

It is found in the postsynaptic cell membrane. Its subcellular location is the golgi apparatus membrane. It localises to the endoplasmic reticulum. The protein localises to the vesicle. Its function is as follows. Core component of the TRAPP complexes which has a function of guanine nucleotide exchange factor activity for Rab1 GTPase. Plays a role in vesicular transport from endoplasmic reticulum to Golgi and autophagy. May play a role in dendrite postsynaptic membrane trafficking. The chain is Trafficking protein particle complex subunit 4 from Homo sapiens (Human).